Here is a 455-residue protein sequence, read N- to C-terminus: Killer cell immunoglobulin-like receptor 3DL2 (455 aa).

Residues 1–21 (MSLTVVSMACVGFFLLQGAWP) form the signal peptide. Residues 22 to 340 (LMGGQDKPFL…SKSGICRHLH (319 aa)) lie on the Extracellular side of the membrane. Ig-like C2-type domains are found at residues 42–102 (GGHV…RPHS), 137–202 (GETV…VPHS), and 237–300 (GENV…FRAL). 2 disulfide bridges follow: cysteine 49–cysteine 95 and cysteine 144–cysteine 195. 4 N-linked (GlcNAc...) asparagine glycosylation sites follow: asparagine 179, asparagine 239, asparagine 273, and asparagine 306. Cysteines 244 and 293 form a disulfide. The chain crosses the membrane as a helical span at residues 341–360 (VLIGTSVVIFLFILLLFFLL). Residues 361-455 (YRWCSNKKNA…APQSGLEGVF (95 aa)) are Cytoplasmic-facing.

It belongs to the immunoglobulin superfamily. In terms of assembly, interacts with peptide-free HLA-F open conformer. In terms of tissue distribution, expressed in astrocytes.

The protein localises to the cell membrane. Receptor on natural killer (NK) cells and T cells for MHC class I molecules. Upon binding of peptide-free HLA-F open conformer, negatively regulates NK and T cell effector functions. Acts as a receptor on astrocytes for HLA-F. Through interaction with HLA-F, may protect motor neurons from astrocyte-induced toxicity. This is Killer cell immunoglobulin-like receptor 3DL2 from Homo sapiens (Human).